Consider the following 89-residue polypeptide: Small ribosomal subunit protein uS15 (89 aa).

This sequence belongs to the universal ribosomal protein uS15 family. As to quaternary structure, part of the 30S ribosomal subunit. Forms a bridge to the 50S subunit in the 70S ribosome, contacting the 23S rRNA.

Functionally, one of the primary rRNA binding proteins, it binds directly to 16S rRNA where it helps nucleate assembly of the platform of the 30S subunit by binding and bridging several RNA helices of the 16S rRNA. In terms of biological role, forms an intersubunit bridge (bridge B4) with the 23S rRNA of the 50S subunit in the ribosome. This is Small ribosomal subunit protein uS15 from Jannaschia sp. (strain CCS1).